We begin with the raw amino-acid sequence, 313 residues long: Porphobilinogen deaminase (313 aa).

At Cys-242 the chain carries S-(dipyrrolylmethanemethyl)cysteine.

It belongs to the HMBS family. Monomer. Dipyrromethane serves as cofactor.

The catalysed reaction is 4 porphobilinogen + H2O = hydroxymethylbilane + 4 NH4(+). Its pathway is porphyrin-containing compound metabolism; protoporphyrin-IX biosynthesis; coproporphyrinogen-III from 5-aminolevulinate: step 2/4. Functionally, tetrapolymerization of the monopyrrole PBG into the hydroxymethylbilane pre-uroporphyrinogen in several discrete steps. This chain is Porphobilinogen deaminase, found in Enterobacter sp. (strain 638).